Consider the following 1306-residue polypeptide: Angiotensin-converting enzyme (1306 aa).

The first 29 residues, 1–29 (MGAASGRRGPGLLLPLPLLLLLPPQPALA), serve as a signal peptide directing secretion. Topologically, residues 30 to 1256 (LDPGLQPGNF…GLDLDAQQAR (1227 aa)) are extracellular. N-linked (GlcNAc...) asparagine glycosylation is found at Asn-38, Asn-54, Asn-74, Glu-103, Asn-111, Ile-121, Tyr-140, Asn-146, and Asn-160. Peptidase M2 domains are found at residues 40-624 (SADE…LGWP) and 643-1222 (VTDE…LGWP). A disulfide bond links Cys-157 and Cys-165. A chloride-binding site is contributed by Tyr-231. N-linked (GlcNAc...) asparagine glycans are attached at residues Asn-318 and Asn-368. Cys-359 and Cys-377 are oxidised to a cystine. Position 390 (His-390) interacts with Zn(2+). The active-site Proton acceptor 1 is Glu-391. Zn(2+) contacts are provided by His-394, Pro-414, Glu-418, and Arg-442. 2 N-linked (GlcNAc...) asparagine glycosylation sites follow: Asn-445 and Asn-509. The active-site Proton donor 1 is the His-520. Arg-529 serves as a coordination point for chloride. The cysteines at positions 545 and 557 are disulfide-linked. N-linked (GlcNAc...) asparagine glycans are attached at residues Asn-617 and Asn-677. 2 N-linked (GlcNAc...) (complex) asparagine glycosylation sites follow: Asn-695 and Asn-714. Cys-757 and Cys-763 are oxidised to a cystine. The N-linked (GlcNAc...) asparagine; partial glycan is linked to Asn-760. Chloride-binding residues include Arg-791 and Tyr-829. N-linked (GlcNAc...) asparagine; partial glycosylation occurs at Asn-942. A disulfide bridge links Cys-957 with Cys-975. A Zn(2+)-binding site is contributed by His-988. The active-site Proton acceptor 2 is Glu-989. Residues His-992 and Glu-1016 each contribute to the Zn(2+) site. Positions 1090 and 1094 each coordinate chloride. His-1118 serves as the catalytic Proton donor 2. Residue Arg-1127 coordinates chloride. A disulfide bridge connects residues Cys-1143 and Cys-1155. Residue Asn-1191 is glycosylated (N-linked (GlcNAc...) asparagine; partial). The interval 1215 to 1256 (HGEKLGWPQYNWTPNSARSEGPLPDSGRVSFLGLDLDAQQAR) is juxtamembrane stalk. A helical transmembrane segment spans residues 1257-1277 (VGQWLLLFLGIALLVATLGLS). At 1278-1306 (QRLFSIRHRSLHRHSHGPQFGSEVELRHS) the chain is on the cytoplasmic side. At Ser-1299 the chain carries Phosphoserine.

Belongs to the peptidase M2 family. Monomer and homodimer; homodimerizes following binding to an inhibitor. Interacts with calmodulin (CALM1, CALM2 or CALM3); interaction takes place in the cytoplasmic region and regulates phosphorylation and proteolytic cleavage. Requires Zn(2+) as cofactor. Chloride serves as cofactor. Post-translationally, produced following proteolytic cleavage by secretase enzymes that cleave the transmembrane form in the juxtamembrane stalk region upstream of the transmembrane region. Cleavage can take place at different sites of the juxtamembrane stalk region. Phosphorylated by CK2 on Ser-1299; which allows membrane retention. Phosphorylated on tyrosine residues on its extracellular part, promoting cleavage by secretase enzymes and formation of the soluble form (Angiotensin-converting enzyme, soluble form). Ubiquitously expressed, with highest levels in lung, kidney, heart, gastrointestinal system and prostate. As to expression, specifically expressed in spermatocytes and adult testis.

It is found in the cell membrane. Its subcellular location is the cytoplasm. The protein localises to the secreted. The catalysed reaction is Release of a C-terminal dipeptide, oligopeptide-|-Xaa-Yaa, when Xaa is not Pro, and Yaa is neither Asp nor Glu. Thus, conversion of angiotensin I to angiotensin II, with increase in vasoconstrictor activity, but no action on angiotensin II.. It catalyses the reaction angiotensin I + H2O = L-histidyl-L-leucine + angiotensin II. It carries out the reaction bradykinin + H2O = L-Phe-L-Arg + bradykinin(1-7). The enzyme catalyses substance P + H2O = substance P(1-9) + L-Leu-L-Met-NH2. The catalysed reaction is substance P + H2O = substance P(1-8) + Gly-L-Leu-L-Met-NH2. It catalyses the reaction substance P + H2O = L-Phe-L-Phe-Gly-L-Leu-L-Met-NH2 + substance P(1-6). It carries out the reaction neurotensin + H2O = neurotensin(1-11) + L-isoleucyl-L-leucine. The enzyme catalyses goralatide + H2O = N-acetyl-L-seryl-L-aspartate + L-lysyl-L-proline. The catalysed reaction is Met-enkephalin + H2O = L-phenylalanyl-L-methionine + L-tyrosylglycylglycine. It catalyses the reaction Leu-enkephalin + H2O = L-tyrosylglycylglycine + L-phenylalanyl-L-leucine. It carries out the reaction Met-enkephalin-Arg-Phe + H2O = L-arginyl-L-phenylalanine + Met-enkephalin. With respect to regulation, the dipeptidyl carboxypeptidase activity is strongly activated by chloride. The dipeptidyl carboxypeptidase activity is specifically inhibited by lisinopril, captopril and enalaprilat. Its activity is regulated as follows. Strongly inhibited by lisinopril and captopril. In terms of biological role, dipeptidyl carboxypeptidase that removes dipeptides from the C-terminus of a variety of circulating hormones, such as angiotensin I, bradykinin or enkephalins, thereby playing a key role in the regulation of blood pressure, electrolyte homeostasis or synaptic plasticity. Composed of two similar catalytic domains, each possessing a functional active site, with different selectivity for substrates. Plays a major role in the angiotensin-renin system that regulates blood pressure and sodium retention by the kidney by converting angiotensin I to angiotensin II, resulting in an increase of the vasoconstrictor activity of angiotensin. Also able to inactivate bradykinin, a potent vasodilator, and therefore enhance the blood pressure response. Acts as a regulator of synaptic transmission by mediating cleavage of neuropeptide hormones, such as substance P, neurotensin or enkephalins. Catalyzes degradation of different enkephalin neuropeptides (Met-enkephalin, Leu-enkephalin, Met-enkephalin-Arg-Phe and possibly Met-enkephalin-Arg-Gly-Leu). Acts as a regulator of synaptic plasticity in the nucleus accumbens of the brain by mediating cleavage of Met-enkephalin-Arg-Phe, a strong ligand of Mu-type opioid receptor OPRM1, into Met-enkephalin. Met-enkephalin-Arg-Phe cleavage by ACE decreases activation of OPRM1, leading to long-term synaptic potentiation of glutamate release. Also acts as a regulator of hematopoietic stem cell differentiation by mediating degradation of hemoregulatory peptide N-acetyl-SDKP (AcSDKP). Acts as a regulator of cannabinoid signaling pathway by mediating degradation of hemopressin, an antagonist peptide of the cannabinoid receptor CNR1. Involved in amyloid-beta metabolism by catalyzing degradation of Amyloid-beta protein 40 and Amyloid-beta protein 42 peptides, thereby preventing plaque formation. Catalyzes cleavage of cholecystokinin (maturation of Cholecystokinin-8 and Cholecystokinin-5) and Gonadoliberin-1 (both maturation and degradation) hormones. Degradation of hemoregulatory peptide N-acetyl-SDKP (AcSDKP) and amyloid-beta proteins is mediated by the N-terminal catalytic domain, while angiotensin I and cholecystokinin cleavage is mediated by the C-terminal catalytic region. Soluble form that is released in blood plasma and other body fluids following proteolytic cleavage in the juxtamembrane stalk region. Functionally, isoform produced by alternative promoter usage that is specifically expressed in spermatocytes and adult testis, and which is required for male fertility. In contrast to somatic isoforms, only contains one catalytic domain. Acts as a dipeptidyl carboxypeptidase that removes dipeptides from the C-terminus of substrates. The identity of substrates that are needed for male fertility is unknown. May also have a glycosidase activity which releases GPI-anchored proteins from the membrane by cleaving the mannose linkage in the GPI moiety. The GPIase activity was reported to be essential for the egg-binding ability of the sperm. This activity is however unclear and has been challenged by other groups, suggesting that it may be indirect. The chain is Angiotensin-converting enzyme from Homo sapiens (Human).